The primary structure comprises 144 residues: Aklanonic acid methyl ester cyclase AcmA (144 aa).

Substrate-binding residues include N51 and Q105.

It belongs to the polyketide cyclase DnrD family. Homotetramer.

The enzyme catalyses methyl aklanonate = aklaviketone. The protein operates within antibiotic biosynthesis; daunorubicin biosynthesis. It participates in antibiotic biosynthesis; carminomycin biosynthesis. It functions in the pathway antibiotic biosynthesis; rhodomycin biosynthesis. Its pathway is antibiotic biosynthesis; aclacinomycin biosynthesis. In terms of biological role, involved in the biosynthesis of aklavinone which is an important precursor common to the formation of the clinically significant anthracyclines such as carminomycin, daunorubicin (daunomycin), rhodomycin, aclacinomycin T (aklavin) and aclacinomycin A (aclarubicin). These compounds are aromatic polyketide antibiotics that exhibit high cytotoxicity and are widely applied in the chemotherapy of a variety of cancers. Catalyzes the cyclization of aklanonic acid methyl ester to yield aklaviketone. It is also able to use nogalonic acid methyl ester as substrate, but produces exclusively auraviketone with C9-R stereochemistry. This is Aklanonic acid methyl ester cyclase AcmA (acma) from Streptomyces galilaeus.